Consider the following 285-residue polypeptide: MNVKENPYLKYLRRDRLPHIFCAGCGNGIVLNTFFKGMEMAGVDFDSIAMVSGIGCSSRIPGYVKCDSLHTTHGRPIAFATGLKLANPSLNVVVFTGDGDAAAIGGNHLIHGARKNIDLTVICINNSIYGMTGGQISPTSPEGSFGTTAPYGALEDPFDLSELVRAAGASYVARWTAAHPLQLANSIKKGLKNRGFSFIEAVSQCPTYFGRKNRMRSPVEMMKFMKENSINRRKALKMDPEEVEGKLIIGEFADAPRPELCDRIYGMIEEKSGKIDIIKSAYRDD.

In terms of assembly, heterotetramer of the KorA, KorB, KorC and KorD subunits.

The enzyme catalyses 2 oxidized [2Fe-2S]-[ferredoxin] + 2-oxoglutarate + CoA = succinyl-CoA + 2 reduced [2Fe-2S]-[ferredoxin] + CO2 + H(+). In Methanothermobacter marburgensis (strain ATCC BAA-927 / DSM 2133 / JCM 14651 / NBRC 100331 / OCM 82 / Marburg) (Methanobacterium thermoautotrophicum), this protein is 2-oxoglutarate synthase subunit KorB (korB).